Consider the following 481-residue polypeptide: Probable glycine dehydrogenase (decarboxylating) subunit 2 (481 aa).

Lys-269 is modified (N6-(pyridoxal phosphate)lysine).

This sequence belongs to the GcvP family. C-terminal subunit subfamily. The glycine cleavage system is composed of four proteins: P, T, L and H. In this organism, the P 'protein' is a heterodimer of two subunits. Requires pyridoxal 5'-phosphate as cofactor.

The enzyme catalyses N(6)-[(R)-lipoyl]-L-lysyl-[glycine-cleavage complex H protein] + glycine + H(+) = N(6)-[(R)-S(8)-aminomethyldihydrolipoyl]-L-lysyl-[glycine-cleavage complex H protein] + CO2. In terms of biological role, the glycine cleavage system catalyzes the degradation of glycine. The P protein binds the alpha-amino group of glycine through its pyridoxal phosphate cofactor; CO(2) is released and the remaining methylamine moiety is then transferred to the lipoamide cofactor of the H protein. This is Probable glycine dehydrogenase (decarboxylating) subunit 2 from Chlorobium chlorochromatii (strain CaD3).